The primary structure comprises 561 residues: Carbohydrate sulfotransferase 15 (561 aa).

Over 1-80 (MRHCINCCVQ…FLRFRKGKRC (80 aa)) the chain is Cytoplasmic. Residues 81 to 101 (SLVFGLIIMTLVMASYILSGA) traverse the membrane as a helical; Signal-anchor for type II membrane protein segment. Residues 102-561 (HQELLISSPF…DDEAFAWKTT (460 aa)) lie on the Lumenal side of the membrane. 263-267 (KCGTT) lines the 3'-phosphoadenylyl sulfate pocket. Residue N364 is glycosylated (N-linked (GlcNAc...) asparagine). 3'-phosphoadenylyl sulfate contacts are provided by R392 and S400.

The protein belongs to the sulfotransferase 1 family. As to quaternary structure, homodimer; disulfide-linked (Potential). The relevance of homodimerization is however unsure. May interact with phosphorylated proteins in resting B-cells, including HCK. A divalent metal cation is required as a cofactor. It depends on glutathione as a cofactor. Post-translationally, glycosylated.

The protein localises to the golgi apparatus membrane. The enzyme catalyses dermatan 4'-sulfate + n 3'-phosphoadenylyl sulfate = dermatan 4',6'-bissulfate + n adenosine 3',5'-bisphosphate + n H(+). The catalysed reaction is chondroitin 4'-sulfate + n 3'-phosphoadenylyl sulfate = chondroitin 4',6'-bissulfate + n adenosine 3',5'-bisphosphate + n H(+). Inhibited by phenyl beta-GalNAc(4,6-SO(4)). Functionally, sulfotransferase that transfers sulfate from 3'-phosphoadenosine 5'-phosphosulfate (PAPS) to the C-6 hydroxyl group of the GalNAc 4-sulfate residue of chondroitin sulfate A and forms chondroitin sulfate E containing GlcA-GalNAc(4,6-SO(4)) repeating units. It also transfers sulfate to a unique non-reducing terminal sequence, GalNAc(4SO4)-GlcA(2SO4)-GalNAc(6SO4), to yield a highly sulfated structure similar to the structure found in thrombomodulin chondroitin sulfate. May also act as a B-cell receptor involved in BCR ligation-mediated early activation that mediate regulatory signals key to B-cell development and/or regulation of B-cell-specific RAG expression; however such results are unclear in vivo. The polypeptide is Carbohydrate sulfotransferase 15 (Chst15) (Mus musculus (Mouse)).